Consider the following 255-residue polypeptide: Ribosomal RNA large subunit methyltransferase E (255 aa).

Residues G50, W52, D68, D84, and D108 each contribute to the S-adenosyl-L-methionine site. Catalysis depends on K148, which acts as the Proton acceptor. The TRAM domain maps to 195–253 (PVRSGEIYDVTVDSVGRTGDGIAMIQGFAVIVKNASPGERLRIKIGPVKQRFAFASILE).

Belongs to the class I-like SAM-binding methyltransferase superfamily. RNA methyltransferase RlmE family.

Its subcellular location is the cytoplasm. It catalyses the reaction uridine(2552) in 23S rRNA + S-adenosyl-L-methionine = 2'-O-methyluridine(2552) in 23S rRNA + S-adenosyl-L-homocysteine + H(+). In terms of biological role, specifically methylates the uridine in position 2552 of 23S rRNA at the 2'-O position of the ribose in the fully assembled 50S ribosomal subunit. This Methanothrix thermoacetophila (strain DSM 6194 / JCM 14653 / NBRC 101360 / PT) (Methanosaeta thermophila) protein is Ribosomal RNA large subunit methyltransferase E.